An 831-amino-acid chain; its full sequence is DNA polymerase I, thermostable (831 aa).

In terms of domain architecture, 5'-3' exonuclease spans 174–258; sequence RPEQWVDYRA…TDLPLEVDFG (85 aa). The polymerase stretch occupies residues 409–831; it reads ERLFQTLKER…LGEDWLSAKE (423 aa).

Belongs to the DNA polymerase type-A family.

The enzyme catalyses DNA(n) + a 2'-deoxyribonucleoside 5'-triphosphate = DNA(n+1) + diphosphate. In terms of biological role, in addition to polymerase activity, this DNA polymerase exhibits 5'-3' exonuclease activity. The polypeptide is DNA polymerase I, thermostable (polA) (Thermus thermophilus).